Reading from the N-terminus, the 420-residue chain is Anaerobic glycerol-3-phosphate dehydrogenase subunit B (420 aa).

Belongs to the anaerobic G-3-P dehydrogenase subunit B family. Composed of a catalytic GlpA/B dimer and of membrane bound GlpC. It depends on FMN as a cofactor.

It carries out the reaction a quinone + sn-glycerol 3-phosphate = dihydroxyacetone phosphate + a quinol. The protein operates within polyol metabolism; glycerol degradation via glycerol kinase pathway; glycerone phosphate from sn-glycerol 3-phosphate (anaerobic route): step 1/1. Its function is as follows. Conversion of glycerol 3-phosphate to dihydroxyacetone. Uses fumarate or nitrate as electron acceptor. This is Anaerobic glycerol-3-phosphate dehydrogenase subunit B from Pectobacterium carotovorum subsp. carotovorum (strain PC1).